The primary structure comprises 324 residues: UDP-N-acetylenolpyruvoylglucosamine reductase (324 aa).

The FAD-binding PCMH-type domain maps to 36–203 (FRAGGLAELM…THAIFEGFPE (168 aa)). The active site involves Arg183. Ser232 serves as the catalytic Proton donor. Glu302 is an active-site residue.

It belongs to the MurB family. The cofactor is FAD.

It is found in the cytoplasm. The enzyme catalyses UDP-N-acetyl-alpha-D-muramate + NADP(+) = UDP-N-acetyl-3-O-(1-carboxyvinyl)-alpha-D-glucosamine + NADPH + H(+). It functions in the pathway cell wall biogenesis; peptidoglycan biosynthesis. In terms of biological role, cell wall formation. This is UDP-N-acetylenolpyruvoylglucosamine reductase from Sinorhizobium fredii (strain NBRC 101917 / NGR234).